The sequence spans 477 residues: Bifunctional protein HldE (477 aa).

The ribokinase stretch occupies residues 1 to 318 (MKVTLPEFER…ENAVRGRADT (318 aa)). Lysine 179 is subject to N6-acetyllysine. Residue 195–198 (NLSE) coordinates ATP. Aspartate 264 is a catalytic residue. The tract at residues 344 to 477 (MTNGVFDILH…IKKIQQDKKG (134 aa)) is cytidylyltransferase.

It in the N-terminal section; belongs to the carbohydrate kinase PfkB family. This sequence in the C-terminal section; belongs to the cytidylyltransferase family. In terms of assembly, homodimer.

It carries out the reaction D-glycero-beta-D-manno-heptose 7-phosphate + ATP = D-glycero-beta-D-manno-heptose 1,7-bisphosphate + ADP + H(+). It catalyses the reaction D-glycero-beta-D-manno-heptose 1-phosphate + ATP + H(+) = ADP-D-glycero-beta-D-manno-heptose + diphosphate. It participates in nucleotide-sugar biosynthesis; ADP-L-glycero-beta-D-manno-heptose biosynthesis; ADP-L-glycero-beta-D-manno-heptose from D-glycero-beta-D-manno-heptose 7-phosphate: step 1/4. Its pathway is nucleotide-sugar biosynthesis; ADP-L-glycero-beta-D-manno-heptose biosynthesis; ADP-L-glycero-beta-D-manno-heptose from D-glycero-beta-D-manno-heptose 7-phosphate: step 3/4. It functions in the pathway bacterial outer membrane biogenesis; LPS core biosynthesis. Functionally, catalyzes the phosphorylation of D-glycero-D-manno-heptose 7-phosphate at the C-1 position to selectively form D-glycero-beta-D-manno-heptose-1,7-bisphosphate. Catalyzes the ADP transfer from ATP to D-glycero-beta-D-manno-heptose 1-phosphate, yielding ADP-D-glycero-beta-D-manno-heptose. The polypeptide is Bifunctional protein HldE (Escherichia coli O157:H7).